We begin with the raw amino-acid sequence, 135 residues long: Large ribosomal subunit protein uL16c (135 aa).

Belongs to the universal ribosomal protein uL16 family. As to quaternary structure, part of the 50S ribosomal subunit.

The protein resides in the plastid. Its subcellular location is the chloroplast. The chain is Large ribosomal subunit protein uL16c from Morus indica (Mulberry).